A 499-amino-acid polypeptide reads, in one-letter code: ATP synthase subunit alpha, chloroplastic (499 aa).

ATP is bound at residue 170–177 (GDRQTGKT).

It belongs to the ATPase alpha/beta chains family. As to quaternary structure, F-type ATPases have 2 components, CF(1) - the catalytic core - and CF(0) - the membrane proton channel. CF(1) has five subunits: alpha(3), beta(3), gamma(1), delta(1), epsilon(1). CF(0) has four main subunits: a, b, b' and c.

It localises to the plastid. Its subcellular location is the chloroplast thylakoid membrane. It carries out the reaction ATP + H2O + 4 H(+)(in) = ADP + phosphate + 5 H(+)(out). Functionally, produces ATP from ADP in the presence of a proton gradient across the membrane. The alpha chain is a regulatory subunit. The chain is ATP synthase subunit alpha, chloroplastic from Emiliania huxleyi (Coccolithophore).